Reading from the N-terminus, the 194-residue chain is Large ribosomal subunit protein uL5 (194 aa).

This sequence belongs to the universal ribosomal protein uL5 family. As to quaternary structure, part of the 50S ribosomal subunit; part of the 5S rRNA/L5/L18/L25 subcomplex. Contacts the 5S rRNA and the P site tRNA. Forms a bridge to the 30S subunit in the 70S ribosome.

Functionally, this is one of the proteins that bind and probably mediate the attachment of the 5S RNA into the large ribosomal subunit, where it forms part of the central protuberance. In the 70S ribosome it contacts protein S13 of the 30S subunit (bridge B1b), connecting the 2 subunits; this bridge is implicated in subunit movement. Contacts the P site tRNA; the 5S rRNA and some of its associated proteins might help stabilize positioning of ribosome-bound tRNAs. The protein is Large ribosomal subunit protein uL5 of Frankia alni (strain DSM 45986 / CECT 9034 / ACN14a).